The chain runs to 645 residues: Beta-galactosidase BgaA (645 aa).

R102 is a binding site for substrate. C106 is a Zn(2+) binding site. N140 lines the substrate pocket. Residue E141 is the Proton donor of the active site. Residues C150, C152, and C155 each coordinate Zn(2+). The Nucleophile role is filled by E312. Substrate is bound by residues W320 and 360 to 363; that span reads EQMH.

The protein belongs to the glycosyl hydrolase 42 family.

The enzyme catalyses Hydrolysis of terminal non-reducing beta-D-galactose residues in beta-D-galactosides.. Its function is as follows. Hydrolyzes chromogen 5-bromo-4-chloro-3-indolyl-beta-D-galactopyranoside (X-Gal) and p-nitrophenyl-beta-D-galactoside (pNPGal). This is Beta-galactosidase BgaA from Thermus sp.